Reading from the N-terminus, the 160-residue chain is UPF0262 protein ELI_10965 (160 aa).

This sequence belongs to the UPF0262 family.

This Erythrobacter litoralis (strain HTCC2594) protein is UPF0262 protein ELI_10965.